The chain runs to 190 residues: Nucleoside triphosphate pyrophosphatase (190 aa).

Catalysis depends on D69, which acts as the Proton acceptor.

Belongs to the Maf family. The cofactor is a divalent metal cation.

Its subcellular location is the cytoplasm. The catalysed reaction is a ribonucleoside 5'-triphosphate + H2O = a ribonucleoside 5'-phosphate + diphosphate + H(+). It carries out the reaction a 2'-deoxyribonucleoside 5'-triphosphate + H2O = a 2'-deoxyribonucleoside 5'-phosphate + diphosphate + H(+). Nucleoside triphosphate pyrophosphatase. May have a dual role in cell division arrest and in preventing the incorporation of modified nucleotides into cellular nucleic acids. In Helicobacter pylori (strain Shi470), this protein is Nucleoside triphosphate pyrophosphatase.